The chain runs to 308 residues: GTPase Era (308 aa).

In terms of domain architecture, Era-type G spans 14 to 181 (RCGFVALIGA…KQALAAMVPP (168 aa)). The interval 22–29 (GAPNVGKS) is G1. 22–29 (GAPNVGKS) contacts GTP. The segment at 48-52 (QTTRA) is G2. The G3 stretch occupies residues 69–72 (DTPG). Residues 69–73 (DTPGI) and 131–134 (NKVD) each bind GTP. The tract at residues 131–134 (NKVD) is G4. The tract at residues 160–162 (ISA) is G5. The 78-residue stretch at 212-289 (LHQELPYQST…HLFLFVKVRE (78 aa)) folds into the KH type-2 domain.

It belongs to the TRAFAC class TrmE-Era-EngA-EngB-Septin-like GTPase superfamily. Era GTPase family. Monomer.

The protein resides in the cytoplasm. The protein localises to the cell inner membrane. Functionally, an essential GTPase that binds both GDP and GTP, with rapid nucleotide exchange. Plays a role in 16S rRNA processing and 30S ribosomal subunit biogenesis and possibly also in cell cycle regulation and energy metabolism. The polypeptide is GTPase Era (Bradyrhizobium sp. (strain BTAi1 / ATCC BAA-1182)).